Reading from the N-terminus, the 142-residue chain is Midkine (142 aa).

The signal sequence occupies residues 1–21 (MELRAFCVILLITFLAVSSQA). Cystine bridges form between Cys-36-Cys-60, Cys-44-Cys-69, Cys-51-Cys-73, Cys-83-Cys-115, and Cys-93-Cys-125.

It belongs to the pleiotrophin family.

It is found in the secreted. Functionally, secreted protein that functions as a cytokine and growth factor and mediates its signal through cell-surface proteoglycan and non-proteoglycan receptors. Binds cell-surface proteoglycan receptors via their chondroitin sulfate (CS) groups. Thereby regulates many processes like inflammatory response, cell proliferation, cell adhesion, cell growth, cell survival, tissue regeneration, cell differentiation and cell migration. Inhibits mesoderm formation and promotes neural formation during development. Plays a role in development of the neuromuscular junction (NMJ). Has antibacterial activity against both Gram-positive and Gram-negative bacteria. This Xenopus tropicalis (Western clawed frog) protein is Midkine.